A 276-amino-acid chain; its full sequence is Nickel import system permease protein NikC (276 aa).

5 helical membrane-spanning segments follow: residues 10-30, 73-93, 108-128, 186-206, and 238-258; these read LIFF…FFVS, LFVT…LGLF, FIDV…ASFF, IIPA…LYIS, and IMLI…NLTG. The ABC transmembrane type-1 domain maps to 69 to 258; that stretch reads ARSTLFVTVL…ITILIFNLTG (190 aa).

Belongs to the binding-protein-dependent transport system permease family. OppBC subfamily. As to quaternary structure, the complex is composed of two ATP-binding proteins (NikD and NikE), two transmembrane proteins (NikB and NikC) and a solute-binding protein (NikA).

It localises to the cell membrane. Its function is as follows. Part of the ABC transporter complex NikABCDE (Opp2) involved in nickel import. Probably responsible for the translocation of the substrate across the membrane. This chain is Nickel import system permease protein NikC, found in Staphylococcus aureus (strain Mu50 / ATCC 700699).